We begin with the raw amino-acid sequence, 100 residues long: Urease subunit gamma (100 aa).

This sequence belongs to the urease gamma subunit family. Heterotrimer of UreA (gamma), UreB (beta) and UreC (alpha) subunits. Three heterotrimers associate to form the active enzyme.

It is found in the cytoplasm. The enzyme catalyses urea + 2 H2O + H(+) = hydrogencarbonate + 2 NH4(+). The protein operates within nitrogen metabolism; urea degradation; CO(2) and NH(3) from urea (urease route): step 1/1. In terms of biological role, expression of the urease operon increases the likelihood of bacterial survival by contributing to acid resistance in vitro and in vivo in BALB/c mice. Y.enterocolitica enters the body via an oral path and must survive the acidic stomach before being able to colonize the intestinal mucosa. This Yersinia enterocolitica protein is Urease subunit gamma.